The sequence spans 144 residues: Ribosome-binding factor A (144 aa).

Disordered regions lie at residues 1 to 22 (MPRH…QLRV) and 125 to 144 (TPAV…EEEQ). A compositionally biased stretch (acidic residues) spans 134–144 (QDPDSDREEEQ).

The protein belongs to the RbfA family. In terms of assembly, monomer. Binds 30S ribosomal subunits, but not 50S ribosomal subunits or 70S ribosomes.

The protein localises to the cytoplasm. One of several proteins that assist in the late maturation steps of the functional core of the 30S ribosomal subunit. Associates with free 30S ribosomal subunits (but not with 30S subunits that are part of 70S ribosomes or polysomes). Required for efficient processing of 16S rRNA. May interact with the 5'-terminal helix region of 16S rRNA. This chain is Ribosome-binding factor A, found in Bradyrhizobium diazoefficiens (strain JCM 10833 / BCRC 13528 / IAM 13628 / NBRC 14792 / USDA 110).